The primary structure comprises 154 residues: 6,7-dimethyl-8-ribityllumazine synthase (154 aa).

Residues Phe23, 57 to 59 (AFE), and 81 to 83 (AVI) each bind 5-amino-6-(D-ribitylamino)uracil. (2S)-2-hydroxy-3-oxobutyl phosphate is bound at residue 86-87 (ST). The Proton donor role is filled by His89. Position 114 (Phe114) interacts with 5-amino-6-(D-ribitylamino)uracil. Arg128 serves as a coordination point for (2S)-2-hydroxy-3-oxobutyl phosphate.

It belongs to the DMRL synthase family.

It catalyses the reaction (2S)-2-hydroxy-3-oxobutyl phosphate + 5-amino-6-(D-ribitylamino)uracil = 6,7-dimethyl-8-(1-D-ribityl)lumazine + phosphate + 2 H2O + H(+). The protein operates within cofactor biosynthesis; riboflavin biosynthesis; riboflavin from 2-hydroxy-3-oxobutyl phosphate and 5-amino-6-(D-ribitylamino)uracil: step 1/2. Catalyzes the formation of 6,7-dimethyl-8-ribityllumazine by condensation of 5-amino-6-(D-ribitylamino)uracil with 3,4-dihydroxy-2-butanone 4-phosphate. This is the penultimate step in the biosynthesis of riboflavin. In Campylobacter jejuni subsp. jejuni serotype O:2 (strain ATCC 700819 / NCTC 11168), this protein is 6,7-dimethyl-8-ribityllumazine synthase.